The chain runs to 204 residues: High frequency lysogenization protein HflD homolog (204 aa).

Belongs to the HflD family.

It localises to the cytoplasm. Its subcellular location is the cell inner membrane. The chain is High frequency lysogenization protein HflD homolog from Shewanella sediminis (strain HAW-EB3).